Here is a 492-residue protein sequence, read N- to C-terminus: Gamma-aminobutyric acid receptor subunit alpha-3 (492 aa).

A signal peptide spans 1-28 (MIITQMSQFYMAGLGLLFLINILPGTTG). The Extracellular portion of the chain corresponds to 29 to 274 (QVESRRQEPG…MTTHFHLKRK (246 aa)). Residue asparagine 63 is glycosylated (N-linked (GlcNAc...) asparagine). Arginine 119 serves as a coordination point for 4-aminobutanoate. Residues asparagine 163 and asparagine 176 are each glycosylated (N-linked (GlcNAc...) asparagine). Threonine 182 contributes to the 4-aminobutanoate binding site. Cysteine 191 and cysteine 205 are oxidised to a cystine. A glycan (N-linked (GlcNAc...) asparagine) is linked at asparagine 228. The helical transmembrane segment at 275–295 (IGYFVIQTYLPCIMTVILSQV) threads the bilayer. The Cytoplasmic portion of the chain corresponds to 296–305 (SFWLNRESVP). Residues 306-325 (ARTVFGVTTVLTMTTLSISA) traverse the membrane as a helical segment. The Extracellular portion of the chain corresponds to 326 to 336 (RNSLPKVAYAT). A helical transmembrane segment spans residues 337-357 (AMDWFMAVCYAFVFSALIEFA). Topologically, residues 358–457 (TVNYFTKRSW…TYNSVSKVDK (100 aa)) are cytoplasmic. The residue at position 426 (serine 426) is a Phosphoserine. A Phosphothreonine modification is found at threonine 427. Serine 433 carries the phosphoserine modification. Residues 458–478 (ISRIIFPVLFAIFNLVYWATY) traverse the membrane as a helical segment. The Extracellular portion of the chain corresponds to 479–492 (VNRESAIKGMIRKQ).

This sequence belongs to the ligand-gated ion channel (TC 1.A.9) family. Gamma-aminobutyric acid receptor (TC 1.A.9.5) subfamily. GABRA3 sub-subfamily. In terms of assembly, heteropentamer, formed by a combination of alpha (GABRA1-6), beta (GABRB1-3), gamma (GABRG1-3), delta (GABRD), epsilon (GABRE), rho (GABRR1-3), pi (GABRP) and theta (GABRQ) chains, each subunit exhibiting distinct physiological and pharmacological properties. Binds UBQLN1. Interacts with GPHN.

Its subcellular location is the postsynaptic cell membrane. It is found in the cell membrane. The catalysed reaction is chloride(in) = chloride(out). Functionally, alpha subunit of the heteropentameric ligand-gated chloride channel gated by gamma-aminobutyric acid (GABA), a major inhibitory neurotransmitter in the brain. GABA-gated chloride channels, also named GABA(A) receptors (GABAAR), consist of five subunits arranged around a central pore and contain GABA active binding site(s) located at the alpha and beta subunit interface(s). When activated by GABA, GABAARs selectively allow the flow of chloride anions across the cell membrane down their electrochemical gradient. Chloride influx into the postsynaptic neuron following GABAAR opening decreases the neuron ability to generate a new action potential, thereby reducing nerve transmission. The chain is Gamma-aminobutyric acid receptor subunit alpha-3 (GABRA3) from Bos taurus (Bovine).